We begin with the raw amino-acid sequence, 390 residues long: 3,5-dihydroxybiphenyl synthase (390 aa).

Residue cysteine 161 is part of the active site.

Belongs to the thiolase-like superfamily. Chalcone/stilbene synthases family. Homodimer.

It carries out the reaction benzoyl-CoA + 3 malonyl-CoA + 3 H(+) = biphenyl-3,5-diol + 4 CO2 + 4 CoA. Functionally, type III polyketide synthase involved in the biosynthesis of the phytoalexins bisphenyls and dibenzofurans. Can also use salicoyl-CoA and malonyl-CoA to produce a diketide intermediate yielding 4-hydroxycoumarin after cyclization and enolization. Can also use m-hydroxybenzoyl-CoA as substrate, producing m-hydroxybenzoyl diacetic acid lactone as a derailment product. No activity with p-hydroxybenzoyl-CoA, CoA-linked cinnamic acids or acetyl-CoA. The protein is 3,5-dihydroxybiphenyl synthase (BIS1) of Sorbus aucuparia (European mountain ash).